Consider the following 208-residue polypeptide: Tektin bundle-interacting protein 1 (208 aa).

Microtubule inner protein component of sperm flagellar doublet microtubules. In terms of tissue distribution, expressed in trachea multiciliated cells.

The protein resides in the cytoplasm. It localises to the cytoskeleton. It is found in the cilium axoneme. The protein localises to the flagellum axoneme. Functionally, microtubule inner protein (MIP) part of the dynein-decorated doublet microtubules (DMTs) in cilia axoneme, which is required for motile cilia beating. Located at the center of the tektin bundle where may function to recruit tektins or stabilize the bundle. This Bos taurus (Bovine) protein is Tektin bundle-interacting protein 1 (TEKTIP1).